The sequence spans 122 residues: Large ribosomal subunit protein uL14c (122 aa).

The protein belongs to the universal ribosomal protein uL14 family. As to quaternary structure, part of the 50S ribosomal subunit.

The protein localises to the plastid. It is found in the chloroplast. Binds to 23S rRNA. The protein is Large ribosomal subunit protein uL14c of Dioscorea elephantipes (Elephant's foot yam).